The sequence spans 415 residues: Lipoyl synthase, mitochondrial (415 aa).

The transit peptide at 1–33 (MAASTSHLRSLCSSTRSLSRSGVIVTPIACRGY) directs the protein to the mitochondrion. [4Fe-4S] cluster is bound by residues C132, C137, C143, C163, C167, C170, and S378. One can recognise a Radical SAM core domain in the interval 148–367 (DKSSATATIM…RQRALEMGFL (220 aa)).

It belongs to the radical SAM superfamily. Lipoyl synthase family. The cofactor is [4Fe-4S] cluster.

Its subcellular location is the mitochondrion. The enzyme catalyses [[Fe-S] cluster scaffold protein carrying a second [4Fe-4S](2+) cluster] + N(6)-octanoyl-L-lysyl-[protein] + 2 oxidized [2Fe-2S]-[ferredoxin] + 2 S-adenosyl-L-methionine + 4 H(+) = [[Fe-S] cluster scaffold protein] + N(6)-[(R)-dihydrolipoyl]-L-lysyl-[protein] + 4 Fe(3+) + 2 hydrogen sulfide + 2 5'-deoxyadenosine + 2 L-methionine + 2 reduced [2Fe-2S]-[ferredoxin]. The protein operates within protein modification; protein lipoylation via endogenous pathway; protein N(6)-(lipoyl)lysine from octanoyl-[acyl-carrier-protein]: step 2/2. In terms of biological role, catalyzes the radical-mediated insertion of two sulfur atoms into the C-6 and C-8 positions of the octanoyl moiety bound to the lipoyl domains of lipoate-dependent enzymes, thereby converting the octanoylated domains into lipoylated derivatives. This Aspergillus clavatus (strain ATCC 1007 / CBS 513.65 / DSM 816 / NCTC 3887 / NRRL 1 / QM 1276 / 107) protein is Lipoyl synthase, mitochondrial.